We begin with the raw amino-acid sequence, 153 residues long: uncharacterized protein (153 aa).

Positions 16-40 (DEQTPLLNNDGIQRTPPSAEADMSL) are disordered. Residues 20–31 (PLLNNDGIQRTP) show a composition bias toward polar residues.

This is an uncharacterized protein from Schizosaccharomyces pombe (strain 972 / ATCC 24843) (Fission yeast).